The following is a 272-amino-acid chain: Putative UTP--glucose-1-phosphate uridylyltransferase (272 aa).

This sequence belongs to the UDPGP type 2 family.

The enzyme catalyses alpha-D-glucose 1-phosphate + UTP + H(+) = UDP-alpha-D-glucose + diphosphate. This Bacillus subtilis (strain 168) protein is Putative UTP--glucose-1-phosphate uridylyltransferase (ytdA).